A 304-amino-acid chain; its full sequence is Rhomboid-like protein 19 (304 aa).

A run of 6 helical transmembrane segments spans residues 23–43 (LVVGHLVVQFIPATVPYLALI), 58–78 (GYFELSVYGVVFSTVSLLFMG), 93–113 (FIFVVNFLTYLCVFVTAIALY), 120–140 (VYLYMPFAGFHGVLAGLLVGI), 158–175 (WLPSIMLILSIASSFFTL), and 179–198 (AYLPTLIFGTYMGWLYLRYL). The tract at residues 247–304 (SEDHDYSTSGAPLPGSDSAEASRRRERGARALEERLGTERLVPARNKDELQSDGLDNV) is disordered. The span at 266–284 (EASRRRERGARALEERLGT) shows a compositional bias: basic and acidic residues.

It belongs to the peptidase S54 family.

Its subcellular location is the membrane. Functionally, probable rhomboid-type serine protease that catalyzes intramembrane proteolysis. The chain is Rhomboid-like protein 19 from Arabidopsis thaliana (Mouse-ear cress).